A 474-amino-acid chain; its full sequence is tRNA-2-methylthio-N(6)-dimethylallyladenosine synthase (474 aa).

Residues 3 to 120 (KKLHIKTWGC…LPDMIDQVRR (118 aa)) form the MTTase N-terminal domain. C12, C49, C83, C157, C161, and C164 together coordinate [4Fe-4S] cluster. Positions 143–375 (RAEGPTAFVS…QDRITQQAMR (233 aa)) constitute a Radical SAM core domain. The region spanning 378-441 (RHMMGTVQRI…TNSLRGKFIR (64 aa)) is the TRAM domain.

This sequence belongs to the methylthiotransferase family. MiaB subfamily. As to quaternary structure, monomer. Requires [4Fe-4S] cluster as cofactor.

It is found in the cytoplasm. It carries out the reaction N(6)-dimethylallyladenosine(37) in tRNA + (sulfur carrier)-SH + AH2 + 2 S-adenosyl-L-methionine = 2-methylsulfanyl-N(6)-dimethylallyladenosine(37) in tRNA + (sulfur carrier)-H + 5'-deoxyadenosine + L-methionine + A + S-adenosyl-L-homocysteine + 2 H(+). In terms of biological role, catalyzes the methylthiolation of N6-(dimethylallyl)adenosine (i(6)A), leading to the formation of 2-methylthio-N6-(dimethylallyl)adenosine (ms(2)i(6)A) at position 37 in tRNAs that read codons beginning with uridine. The polypeptide is tRNA-2-methylthio-N(6)-dimethylallyladenosine synthase (Shewanella sp. (strain ANA-3)).